The sequence spans 493 residues: Cytochrome P450 2W1 (493 aa).

The first 23 residues, 1 to 23, serve as a signal peptide directing secretion; the sequence is MALLLLGVWGILLLLGLWGLLQG. A glycan (N-linked (GlcNAc...) asparagine) is linked at Asn-180. A heme-binding site is contributed by Cys-436.

Belongs to the cytochrome P450 family. Heme serves as cofactor. Detected in colon, ileum, and testes.

The protein resides in the endoplasmic reticulum lumen. It localises to the cell membrane. Its subcellular location is the microsome membrane. It carries out the reaction all-trans-retinoate + reduced [NADPH--hemoprotein reductase] + O2 = all-trans-4-hydroxyretinoate + oxidized [NADPH--hemoprotein reductase] + H2O + H(+). The enzyme catalyses 1-(9Z-octadecenoyl)-sn-glycero-3-phosphocholine + reduced [NADPH--hemoprotein reductase] + O2 = 1-[8-hydroxy-(9Z)-octadecenoyl]-sn-glycero-3-phosphocholine + oxidized [NADPH--hemoprotein reductase] + H2O + H(+). It catalyses the reaction 1-(9Z-octadecenoyl)-sn-glycero-3-phosphocholine + reduced [NADPH--hemoprotein reductase] + O2 = 1-[11-hydroxy-(9Z)-octadecenoyl]-sn-glycero-3-phosphocholine + oxidized [NADPH--hemoprotein reductase] + H2O + H(+). The catalysed reaction is 1-(9Z-octadecenoyl)-sn-glycero-3-phosphocholine + reduced [NADPH--hemoprotein reductase] + O2 = 1-[(9S,10R)-epoxy-octadecanoyl]-sn-glycero-3-phosphocholine + oxidized [NADPH--hemoprotein reductase] + H2O + H(+). It carries out the reaction 1-(9Z-octadecenoyl)-sn-glycero-3-phosphocholine + reduced [NADPH--hemoprotein reductase] + O2 = 1-[(9R,10S)-epoxy-octadecanoyl]-sn-glycero-3-phosphocholine + oxidized [NADPH--hemoprotein reductase] + H2O + H(+). Functionally, a cytochrome P450 monooxygenase that may play a role in retinoid and phospholipid metabolism. Catalyzes the hydroxylation of saturated carbon hydrogen bonds. Hydroxylates all trans-retinoic acid (atRA) to 4-hydroxyretinoate and may regulate atRA clearance. Other retinoids such as all-trans retinol and all-trans retinal are potential endogenous substrates. Catalyzes both epoxidation of double bonds and hydroxylation of carbon hydrogen bonds of the fatty acyl chain of 1-acylphospholipids/2-lysophospholipids. Can metabolize various lysophospholipids classes including lysophosphatidylcholines (LPCs), lysophosphatidylinositols (LPIs), lysophosphatidylserines (LPSs), lysophosphatidylglycerols (LPGs), lysophosphatidylethanolamines (LPEs) and lysophosphatidic acids (LPAs). Has low or no activity toward 2-acylphospholipids/1-lysophospholipids, diacylphospholipids and free fatty acids. May play a role in tumorigenesis by activating procarcinogens such as aflatoxin B1, polycyclic aromatic hydrocarbon dihydrodiols and aromatic amines. Mechanistically, uses molecular oxygen inserting one oxygen atom into a substrate, and reducing the second into a water molecule, with two electrons provided by NADPH via cytochrome P450 reductase (CPR; NADPH-ferrihemoprotein reductase). This is Cytochrome P450 2W1 (Cyp2w1) from Mus musculus (Mouse).